Consider the following 310-residue polypeptide: Carbamate kinase-like protein YqeA (310 aa).

Belongs to the carbamate kinase family.

This chain is Carbamate kinase-like protein YqeA (yqeA), found in Escherichia coli (strain K12).